Reading from the N-terminus, the 151-residue chain is Chemokine-like factor (151 aa).

Positions 13–133 constitute an MARVEL domain; the sequence is FCLSLKCFVK…DCALMCQKLR (121 aa). 4 consecutive transmembrane segments (helical) span residues 19-39, 45-65, 74-94, and 107-127; these read CFVK…FIVA, YIVI…LYMC, FFWP…MLIV, and IMVG…DCAL. The N-linked (GlcNAc...) asparagine glycan is linked to asparagine 142.

This sequence belongs to the chemokine-like factor family. Both isoforms have highest expression levels in testis with relatively lower expression level in liver, spleen, lung, brain and heart and barely detectable levels in skeletal muscle and kidney were barely detected. In most tissues, isoform CKLF2 has higher expression levels than isoform CKLF1.

It localises to the secreted. The protein localises to the membrane. In terms of biological role, may play an important role in inflammation and regeneration of skeletal muscle. Essential for embryonic development. Functionally, has chemotactic response in monocytes, neutrophils and lymphocytes. Binds CCR4. The polypeptide is Chemokine-like factor (Cklf) (Rattus norvegicus (Rat)).